The sequence spans 623 residues: GATA zinc finger domain-containing protein 6 (623 aa).

Disordered stretches follow at residues 137-156 (IISPPQQSQQPPPPTSGNNF), 167-197 (INNNSNNNNNNNNCKSYKKQQTSKGSATAST), and 245-289 (PTTT…TAST). Positions 167-179 (INNNSNNNNNNNN) are enriched in low complexity. Positions 185–197 (KQQTSKGSATAST) are enriched in polar residues. The GATA-type zinc-finger motif lies at 320–345 (CHSCGETQTSQWRRGPDGCKSLCNAC). Residues 398-509 (IQQQQQKDDH…SINHNDKLIN (112 aa)) form a disordered region. Residues 410 to 482 (LSRPSSFSSQ…TSPTISSESL (73 aa)) show a composition bias toward low complexity. A compositionally biased stretch (polar residues) spans 483 to 502 (NFSSATNTPTNLSPNLQSIN).

This is GATA zinc finger domain-containing protein 6 (gtaF) from Dictyostelium discoideum (Social amoeba).